We begin with the raw amino-acid sequence, 197 residues long: Peptide deformylase (197 aa).

Residues C106 and H148 each contribute to the Fe cation site. E149 is a catalytic residue. Residue H152 participates in Fe cation binding.

This sequence belongs to the polypeptide deformylase family. Fe(2+) is required as a cofactor.

The catalysed reaction is N-terminal N-formyl-L-methionyl-[peptide] + H2O = N-terminal L-methionyl-[peptide] + formate. Removes the formyl group from the N-terminal Met of newly synthesized proteins. Requires at least a dipeptide for an efficient rate of reaction. N-terminal L-methionine is a prerequisite for activity but the enzyme has broad specificity at other positions. The sequence is that of Peptide deformylase from Mycobacterium ulcerans (strain Agy99).